The sequence spans 155 residues: Small ribosomal subunit protein uS7cz/uS7cy (155 aa).

The protein belongs to the universal ribosomal protein uS7 family. In terms of assembly, part of the 30S ribosomal subunit.

The protein localises to the plastid. Its subcellular location is the chloroplast. Functionally, one of the primary rRNA binding proteins, it binds directly to 16S rRNA where it nucleates assembly of the head domain of the 30S subunit. This chain is Small ribosomal subunit protein uS7cz/uS7cy (rps7-A), found in Calycanthus floridus var. glaucus (Eastern sweetshrub).